A 35-amino-acid chain; its full sequence is MSDIN-like toxin proprotein 6 (35 aa).

Residues 1-10 (MSDINTTRLP) constitute a propeptide that is removed on maturation. Positions 11 to 18 (FVFVASPP) form a cross-link, cyclopeptide (Phe-Pro). The propeptide occupies 19 to 35 (CVGDDIAMVLTRGENLC).

Belongs to the MSDIN fungal toxin family. Post-translationally, processed by the macrocyclase-peptidase enzyme POPB to yield a toxic cyclic octapeptide. POPB first removes 10 residues from the N-terminus. Conformational trapping of the remaining peptide forces the enzyme to release this intermediate rather than proceed to macrocyclization. The enzyme rebinds the remaining peptide in a different conformation and catalyzes macrocyclization of the N-terminal 8 residues. Expressed in basidiocarps.

In terms of biological role, probable toxin that belongs to the MSDIN-like toxin family responsible for a large number of food poisoning cases and deaths. The chain is MSDIN-like toxin proprotein 6 from Amanita exitialis (Guangzhou destroying angel).